A 386-amino-acid polypeptide reads, in one-letter code: Histidinol-phosphate aminotransferase (386 aa).

K240 carries the N6-(pyridoxal phosphate)lysine modification.

This sequence belongs to the class-II pyridoxal-phosphate-dependent aminotransferase family. Histidinol-phosphate aminotransferase subfamily. As to quaternary structure, homodimer. It depends on pyridoxal 5'-phosphate as a cofactor.

The catalysed reaction is L-histidinol phosphate + 2-oxoglutarate = 3-(imidazol-4-yl)-2-oxopropyl phosphate + L-glutamate. It functions in the pathway amino-acid biosynthesis; L-histidine biosynthesis; L-histidine from 5-phospho-alpha-D-ribose 1-diphosphate: step 7/9. This Bifidobacterium longum (strain NCC 2705) protein is Histidinol-phosphate aminotransferase.